Consider the following 220-residue polypeptide: 7-cyano-7-deazaguanine synthase (220 aa).

An ATP-binding site is contributed by 7 to 17; that stretch reads LSGGLDSAVCL. Zn(2+) is bound by residues Cys-191, Cys-199, Cys-202, and Cys-205.

It belongs to the QueC family. Homodimer. Zn(2+) is required as a cofactor.

It carries out the reaction 7-carboxy-7-deazaguanine + NH4(+) + ATP = 7-cyano-7-deazaguanine + ADP + phosphate + H2O + H(+). It functions in the pathway purine metabolism; 7-cyano-7-deazaguanine biosynthesis. In terms of biological role, catalyzes the ATP-dependent conversion of 7-carboxy-7-deazaguanine (CDG) to 7-cyano-7-deazaguanine (preQ(0)). The sequence is that of 7-cyano-7-deazaguanine synthase from Desulforudis audaxviator (strain MP104C).